The primary structure comprises 808 residues: Protein SEY1 (808 aa).

Residues 1 to 21 form a disordered region; sequence MSSELSEGELSHTSSSSSFVP. Residues 1-701 are Cytoplasmic-facing; sequence MSSELSEGEL…KRSIVQHITQ (701 aa). One can recognise a GB1/RHD3-type G domain in the interval 57 to 286; the sequence is GNNYHIISVF…VGDELFKPEY (230 aa). 67 to 74 is a binding site for GTP; sequence GSQSTGKS. The chain crosses the membrane as a helical span at residues 702–722; that stretch reads IPYYIYLVIVFLGWNEFMAII. Over 723 to 725 the chain is Lumenal; sequence RNP. Residues 726-746 form a helical membrane-spanning segment; that stretch reads LLFSLALLLGASVYILYKLNL. Topologically, residues 747–808 are cytoplasmic; the sequence is LKPAIVVAQR…YSDNIELDDM (62 aa).

It belongs to the TRAFAC class dynamin-like GTPase superfamily. GB1/RHD3 GTPase family. RHD3 subfamily.

Its subcellular location is the endoplasmic reticulum membrane. Its function is as follows. Cooperates with the reticulon proteins and tubule-shaping DP1 family proteins to generate and maintain the structure of the tubular endoplasmic reticulum network. Has GTPase activity, which is required for its function in ER organization. This is Protein SEY1 from Candida tropicalis (strain ATCC MYA-3404 / T1) (Yeast).